Here is a 1118-residue protein sequence, read N- to C-terminus: Receptor-type guanylate cyclase gcy-2 (1118 aa).

Residues 1–21 (MVSSILKFVILIHSTFHSTFA) form the signal peptide. Residues 22 to 494 (QNLPDTTVAP…FCPISFWEQY (473 aa)) are Extracellular-facing. Residues Asn-222, Asn-351, Asn-361, Asn-387, Asn-420, and Asn-452 are each glycosylated (N-linked (GlcNAc...) asparagine). The helical transmembrane segment at 495–515 (MILAIVSISVIVLMVIIMIIG) threads the bilayer. Residues 516–1118 (CLCVISAKHA…FKMDTLKVAN (603 aa)) lie on the Cytoplasmic side of the membrane. Positions 558–875 (LQSAPSISTG…EGFDSVTVFF (318 aa)) constitute a Protein kinase domain. Residues 872 to 1002 (TVFFSDVVKF…DTVNTASRME (131 aa)) enclose the Guanylate cyclase domain. The segment at 1076 to 1103 (WITPPAPKPEIRSVSSHGSRPPSVYDPL) is disordered.

It belongs to the adenylyl cyclase class-4/guanylyl cyclase family. As to expression, expressed bilaterally in AWA and ASI sensory neurons and in RIA and PVT interneurons.

The protein localises to the cell membrane. It carries out the reaction GTP = 3',5'-cyclic GMP + diphosphate. Guanylate cyclase involved in the production of the second messenger cGMP. This is Receptor-type guanylate cyclase gcy-2 from Caenorhabditis elegans.